Consider the following 308-residue polypeptide: Spermidine synthase 2 (308 aa).

The 238-residue stretch at 17 to 254 (PGWFSEISPL…GVIGFMLCST (238 aa)) folds into the PABS domain. Glutamine 48 contributes to the S-adenosyl 3-(methylsulfanyl)propylamine binding site. Tyrosine 78 lines the putrescine pocket. S-adenosyl 3-(methylsulfanyl)propylamine-binding positions include glutamine 79, aspartate 103, glutamate 123, 154 to 155 (DG), and aspartate 173. The active-site Proton acceptor is the aspartate 173. Putrescine contacts are provided by residues 173–176 (DSSD) and tyrosine 242.

Belongs to the spermidine/spermine synthase family.

The enzyme catalyses S-adenosyl 3-(methylsulfanyl)propylamine + putrescine = S-methyl-5'-thioadenosine + spermidine + H(+). The protein operates within amine and polyamine biosynthesis; spermidine biosynthesis; spermidine from putrescine: step 1/1. This Hyoscyamus niger (Black henbane) protein is Spermidine synthase 2.